The sequence spans 416 residues: Transcription termination factor Rho (416 aa).

One can recognise a Rho RNA-BD domain in the interval L51 to K121. ATP-binding positions include G162–G167, K174–T179, and R205.

It belongs to the Rho family. As to quaternary structure, homohexamer. The homohexamer assembles into an open ring structure.

Its function is as follows. Facilitates transcription termination by a mechanism that involves Rho binding to the nascent RNA, activation of Rho's RNA-dependent ATPase activity, and release of the mRNA from the DNA template. The protein is Transcription termination factor Rho of Streptobacillus moniliformis (strain ATCC 14647 / DSM 12112 / NCTC 10651 / 9901).